A 442-amino-acid polypeptide reads, in one-letter code: Casein kinase 1-like protein 10 (442 aa).

The region spanning 9-278 is the Protein kinase domain; the sequence is FKLGRKIGSG…LKRLFRDLFI (270 aa). ATP contacts are provided by residues 15-23 and Lys38; that span reads IGSGSFGEL. The active-site Proton acceptor is the Asp128. Disordered regions lie at residues 299–323 and 381–421; these read GSIS…ERNE and AVMS…LSAR. Residues 305–317 show a composition bias toward pro residues; the sequence is RPNPKPALDPPGP. Over residues 384 to 394 the composition is skewed to low complexity; that stretch reads SSSQPGSSGEL. Polar residues predominate over residues 400–417; sequence SKLFSSSAQKIQPVQETK.

The protein belongs to the protein kinase superfamily. CK1 Ser/Thr protein kinase family. Casein kinase I subfamily. In terms of assembly, monomer. Post-translationally, autophosphorylated.

The protein resides in the cytoplasm. The protein localises to the cell junction. It is found in the plasmodesma. The catalysed reaction is L-seryl-[protein] + ATP = O-phospho-L-seryl-[protein] + ADP + H(+). It carries out the reaction L-threonyl-[protein] + ATP = O-phospho-L-threonyl-[protein] + ADP + H(+). Functionally, casein kinases are operationally defined by their preferential utilization of acidic proteins such as caseins as substrates. It can phosphorylate a large number of proteins. This chain is Casein kinase 1-like protein 10, found in Arabidopsis thaliana (Mouse-ear cress).